A 396-amino-acid polypeptide reads, in one-letter code: dTDP-epi-vancosaminyltransferase (396 aa).

10-12 is a binding site for dTDP-beta-L-4-epi-vancosamine; the sequence is SRG. Positions 127, 133, 141, and 169 each coordinate devancoaminyl-vancomycin. DTDP-beta-L-4-epi-vancosamine is bound by residues arginine 207, serine 230, 277–278, and 293–298; these read EV and HDSAGT.

Belongs to the glycosyltransferase 28 family.

The catalysed reaction is dTDP-beta-L-4-epi-vancosamine + devancoaminyl-vancomycin = chloroorienticin B + dTDP + H(+). It functions in the pathway antibiotic biosynthesis; vancomycin biosynthesis. Functionally, catalyzes the attachment of 4-epi-vancosamine from a TDP donor to the beta-OH-Tyr-6 of the aglycone cosubstrate in the biosynthesis of glycopeptide antibiotic chloroeremomycin, a member of the vancomycin group of antibiotics. Strongly prefers devancoaminyl-vancomycin (DVV) as substrate rather than the heptapeptide vancomycin aglycone (AGV). Acts downstream of GtfB. The polypeptide is dTDP-epi-vancosaminyltransferase (gtfA) (Amycolatopsis orientalis (Nocardia orientalis)).